A 202-amino-acid polypeptide reads, in one-letter code: Dephospho-CoA kinase (202 aa).

In terms of domain architecture, DPCK spans 3–200 (TIGLTGGIGS…QRYLTLAANR (198 aa)). An ATP-binding site is contributed by 11-16 (GSGKSA).

It belongs to the CoaE family.

Its subcellular location is the cytoplasm. It carries out the reaction 3'-dephospho-CoA + ATP = ADP + CoA + H(+). It functions in the pathway cofactor biosynthesis; coenzyme A biosynthesis; CoA from (R)-pantothenate: step 5/5. Catalyzes the phosphorylation of the 3'-hydroxyl group of dephosphocoenzyme A to form coenzyme A. This is Dephospho-CoA kinase from Thiobacillus denitrificans (strain ATCC 25259 / T1).